The chain runs to 475 residues: tRNA-2-methylthio-N(6)-dimethylallyladenosine synthase (475 aa).

In terms of domain architecture, MTTase N-terminal spans 3–120 (KKLHIKTWGC…LPEMIDQIRA (118 aa)). The [4Fe-4S] cluster site is built by Cys12, Cys49, Cys83, Cys157, Cys161, and Cys164. Positions 143-375 (RADGPSAFVS…QDRITQQAMR (233 aa)) constitute a Radical SAM core domain. One can recognise a TRAM domain in the interval 378–441 (RQMVGTVQRI…TNSLRGVFIR (64 aa)).

The protein belongs to the methylthiotransferase family. MiaB subfamily. Monomer. Requires [4Fe-4S] cluster as cofactor.

Its subcellular location is the cytoplasm. It carries out the reaction N(6)-dimethylallyladenosine(37) in tRNA + (sulfur carrier)-SH + AH2 + 2 S-adenosyl-L-methionine = 2-methylsulfanyl-N(6)-dimethylallyladenosine(37) in tRNA + (sulfur carrier)-H + 5'-deoxyadenosine + L-methionine + A + S-adenosyl-L-homocysteine + 2 H(+). In terms of biological role, catalyzes the methylthiolation of N6-(dimethylallyl)adenosine (i(6)A), leading to the formation of 2-methylthio-N6-(dimethylallyl)adenosine (ms(2)i(6)A) at position 37 in tRNAs that read codons beginning with uridine. This Shewanella halifaxensis (strain HAW-EB4) protein is tRNA-2-methylthio-N(6)-dimethylallyladenosine synthase.